The chain runs to 876 residues: Alanine--tRNA ligase (876 aa).

Zn(2+) contacts are provided by histidine 568, histidine 572, cysteine 670, and histidine 674.

It belongs to the class-II aminoacyl-tRNA synthetase family. Requires Zn(2+) as cofactor.

It is found in the cytoplasm. It carries out the reaction tRNA(Ala) + L-alanine + ATP = L-alanyl-tRNA(Ala) + AMP + diphosphate. In terms of biological role, catalyzes the attachment of alanine to tRNA(Ala) in a two-step reaction: alanine is first activated by ATP to form Ala-AMP and then transferred to the acceptor end of tRNA(Ala). Also edits incorrectly charged Ser-tRNA(Ala) and Gly-tRNA(Ala) via its editing domain. The sequence is that of Alanine--tRNA ligase from Geotalea uraniireducens (strain Rf4) (Geobacter uraniireducens).